Reading from the N-terminus, the 202-residue chain is 3-isopropylmalate dehydratase small subunit (202 aa).

Belongs to the LeuD family. LeuD type 1 subfamily. In terms of assembly, heterodimer of LeuC and LeuD.

It carries out the reaction (2R,3S)-3-isopropylmalate = (2S)-2-isopropylmalate. Its pathway is amino-acid biosynthesis; L-leucine biosynthesis; L-leucine from 3-methyl-2-oxobutanoate: step 2/4. In terms of biological role, catalyzes the isomerization between 2-isopropylmalate and 3-isopropylmalate, via the formation of 2-isopropylmaleate. The protein is 3-isopropylmalate dehydratase small subunit of Nocardia farcinica (strain IFM 10152).